The sequence spans 450 residues: Asparagine--tRNA ligase (450 aa).

This sequence belongs to the class-II aminoacyl-tRNA synthetase family. As to quaternary structure, homodimer.

It localises to the cytoplasm. It catalyses the reaction tRNA(Asn) + L-asparagine + ATP = L-asparaginyl-tRNA(Asn) + AMP + diphosphate + H(+). In Metamycoplasma arthritidis (strain 158L3-1) (Mycoplasma arthritidis), this protein is Asparagine--tRNA ligase.